A 199-amino-acid polypeptide reads, in one-letter code: Potassium-transporting ATPase KdpC subunit (199 aa).

The helical transmembrane segment at 7 to 27 (PAIVLLLALTLLTGLAYPLAM) threads the bilayer. Residues 67 to 86 (HGRPSATTAADPQDSSKTVP) form a disordered region. Over residues 71 to 84 (SATTAADPQDSSKT) the composition is skewed to polar residues.

The protein belongs to the KdpC family. As to quaternary structure, the system is composed of three essential subunits: KdpA, KdpB and KdpC.

Its subcellular location is the cell inner membrane. Part of the high-affinity ATP-driven potassium transport (or Kdp) system, which catalyzes the hydrolysis of ATP coupled with the electrogenic transport of potassium into the cytoplasm. This subunit acts as a catalytic chaperone that increases the ATP-binding affinity of the ATP-hydrolyzing subunit KdpB by the formation of a transient KdpB/KdpC/ATP ternary complex. The sequence is that of Potassium-transporting ATPase KdpC subunit from Rhodopseudomonas palustris (strain BisB18).